Reading from the N-terminus, the 665-residue chain is Succinate dehydrogenase [ubiquinone] flavoprotein subunit B, mitochondrial (665 aa).

The transit peptide at 1–45 (MALLKVAPSRLLSRALQLTSTLQNCTATSIAARRNFHFTVYGRKD) directs the protein to the mitochondrion. Positions 72, 75, 94, 95, and 101 each coordinate FAD. At H102 the chain carries Tele-8alpha-FAD histidine. FAD-binding residues include T103, G108, A224, and D278. The oxaloacetate site is built by H299, R343, and H410. R343 (proton acceptor) is an active-site residue. E443 contributes to the FAD binding site. The oxaloacetate site is built by R454 and A457. FAD is bound by residues S459 and L460.

This sequence belongs to the FAD-dependent oxidoreductase 2 family. FRD/SDH subfamily. Component of complex II composed of four subunits: a flavoprotein (FP), an iron-sulfur protein (IP), and a cytochrome b composed of a large and a small subunit. The cofactor is FAD.

Its subcellular location is the mitochondrion inner membrane. It carries out the reaction a ubiquinone + succinate = a ubiquinol + fumarate. The enzyme catalyses (R)-malate + a quinone = enol-oxaloacetate + a quinol. The catalysed reaction is (S)-malate + a quinone = enol-oxaloacetate + a quinol. It functions in the pathway carbohydrate metabolism; tricarboxylic acid cycle; fumarate from succinate (eukaryal route): step 1/1. Its activity is regulated as follows. Enol-oxaloacetate inhibits the succinate dehydrogenase activity. Functionally, flavoprotein (FP) subunit of succinate dehydrogenase (SDH) that is involved in complex II of the mitochondrial electron transport chain and is responsible for transferring electrons from succinate to ubiquinone (coenzyme Q). SDH also oxidizes malate to the non-canonical enol form of oxaloacetate, enol-oxaloacetate. Enol-oxaloacetate, which is a potent inhibitor of the succinate dehydrogenase activity, is further isomerized into keto-oxaloacetate. This Xenopus laevis (African clawed frog) protein is Succinate dehydrogenase [ubiquinone] flavoprotein subunit B, mitochondrial (sdha-b).